The sequence spans 210 residues: Dephospho-CoA kinase (210 aa).

Residues 4–202 (WVGLTGGIGS…AFYSGIFASK (199 aa)) enclose the DPCK domain. ATP is bound at residue 12–17 (GSGKSA).

This sequence belongs to the CoaE family.

The protein localises to the cytoplasm. It carries out the reaction 3'-dephospho-CoA + ATP = ADP + CoA + H(+). Its pathway is cofactor biosynthesis; coenzyme A biosynthesis; CoA from (R)-pantothenate: step 5/5. In terms of biological role, catalyzes the phosphorylation of the 3'-hydroxyl group of dephosphocoenzyme A to form coenzyme A. The protein is Dephospho-CoA kinase of Neisseria meningitidis serogroup A / serotype 4A (strain DSM 15465 / Z2491).